We begin with the raw amino-acid sequence, 405 residues long: Dynactin subunit 2 (405 aa).

The segment at 1–25 is disordered; that stretch reads MADPKYADLPGIARNEPDVYETSDL. Ala2 carries the post-translational modification N-acetylalanine. Phosphotyrosine is present on Tyr6. Ser85 carries the phosphoserine modification. At Tyr88 the chain carries Phosphotyrosine. The stretch at 105–132 forms a coiled coil; that stretch reads YQRLLHEVQELTTEVEKIKMTVKESATE. Thr136 carries the post-translational modification Phosphothreonine. Positions 187-207 are disordered; sequence KNTKGAGSGGKTTSGSPPDSS. Ser324 is subject to Phosphoserine.

Belongs to the dynactin subunit 2 family. As to quaternary structure, subunit of dynactin, a multiprotein complex part of a tripartite complex with dynein and a adapter, such as BICDL1, BICD2 or HOOK3. The dynactin complex is built around ACTR1A/ACTB filament and consists of an actin-related filament composed of a shoulder domain, a pointed end and a barbed end. Its length is defined by its flexible shoulder domain. The soulder is composed of 2 DCTN1 subunits, 4 DCTN2 and 2 DCTN3. The 4 DCNT2 (via N-terminus) bind the ACTR1A filament and act as molecular rulers to determine the length. The pointed end is important for binding dynein-dynactin cargo adapters and consists of 4 subunits: ACTR10, DCNT4, DCTN5 and DCTN6. The barbed end is composed of a CAPZA1:CAPZB heterodimers, which binds ACTR1A/ACTB filament and dynactin and stabilizes dynactin. Interacts with BICD2 and CEP135. Interacts with DYNAP. Interacts with ECPAS. Interacts with MAPRE1.

It localises to the cytoplasm. The protein localises to the cytoskeleton. Its subcellular location is the microtubule organizing center. It is found in the centrosome. The protein resides in the membrane. Its function is as follows. Part of the dynactin complex that activates the molecular motor dynein for ultra-processive transport along microtubules. In the dynactin soulder domain, binds the ACTR1A filament and acts as a molecular ruler to determine the length. Modulates cytoplasmic dynein binding to an organelle, and plays a role in prometaphase chromosome alignment and spindle organization during mitosis. Involved in anchoring microtubules to centrosomes. May play a role in synapse formation during brain development. This is Dynactin subunit 2 (DCTN2) from Sus scrofa (Pig).